A 263-amino-acid chain; its full sequence is Ribosomal RNA large subunit methyltransferase E (263 aa).

S-adenosyl-L-methionine contacts are provided by Gly48, Trp50, Asp68, Asp88, and Asp118. Lys158 serves as the catalytic Proton acceptor. The region spanning 205-263 (PVREGDIVEATIEDIGEEGDGIAKVENFTVFVSGVEDGETVEVRIDDVKPRYAFAEPVE) is the TRAM domain.

The protein belongs to the class I-like SAM-binding methyltransferase superfamily. RNA methyltransferase RlmE family.

It localises to the cytoplasm. The catalysed reaction is uridine(2552) in 23S rRNA + S-adenosyl-L-methionine = 2'-O-methyluridine(2552) in 23S rRNA + S-adenosyl-L-homocysteine + H(+). Its function is as follows. Specifically methylates the uridine in position 2552 of 23S rRNA at the 2'-O position of the ribose in the fully assembled 50S ribosomal subunit. The polypeptide is Ribosomal RNA large subunit methyltransferase E (Haloarcula marismortui (strain ATCC 43049 / DSM 3752 / JCM 8966 / VKM B-1809) (Halobacterium marismortui)).